We begin with the raw amino-acid sequence, 168 residues long: Photosystem I assembly protein Ycf3 (168 aa).

3 TPR repeats span residues 35-68 (AFTY…EIDP), 72-105 (SYIL…NPFL), and 120-153 (GEQA…TPGN).

This sequence belongs to the Ycf3 family.

It localises to the plastid. It is found in the chloroplast thylakoid membrane. Functionally, essential for the assembly of the photosystem I (PSI) complex. May act as a chaperone-like factor to guide the assembly of the PSI subunits. The protein is Photosystem I assembly protein Ycf3 of Helianthus annuus (Common sunflower).